The chain runs to 66 residues: Large ribosomal subunit protein bL31 (66 aa).

Zn(2+)-binding residues include Cys-16, Cys-18, Cys-36, and Cys-39.

Belongs to the bacterial ribosomal protein bL31 family. Type A subfamily. In terms of assembly, part of the 50S ribosomal subunit. Zn(2+) is required as a cofactor.

Binds the 23S rRNA. In Natranaerobius thermophilus (strain ATCC BAA-1301 / DSM 18059 / JW/NM-WN-LF), this protein is Large ribosomal subunit protein bL31.